Here is a 300-residue protein sequence, read N- to C-terminus: 3-methyl-2-oxobutanoate hydroxymethyltransferase (300 aa).

Mg(2+) is bound by residues aspartate 75 and aspartate 118. Residues 75–76 (DS), aspartate 118, and lysine 147 each bind 3-methyl-2-oxobutanoate. Glutamate 149 lines the Mg(2+) pocket. Glutamate 216 acts as the Proton acceptor in catalysis.

This sequence belongs to the PanB family. In terms of assembly, homodecamer; pentamer of dimers. Mg(2+) is required as a cofactor.

The protein localises to the cytoplasm. The enzyme catalyses 3-methyl-2-oxobutanoate + (6R)-5,10-methylene-5,6,7,8-tetrahydrofolate + H2O = 2-dehydropantoate + (6S)-5,6,7,8-tetrahydrofolate. The protein operates within cofactor biosynthesis; (R)-pantothenate biosynthesis; (R)-pantoate from 3-methyl-2-oxobutanoate: step 1/2. Catalyzes the reversible reaction in which hydroxymethyl group from 5,10-methylenetetrahydrofolate is transferred onto alpha-ketoisovalerate to form ketopantoate. The polypeptide is 3-methyl-2-oxobutanoate hydroxymethyltransferase (Verminephrobacter eiseniae (strain EF01-2)).